We begin with the raw amino-acid sequence, 852 residues long: Sarcoplasmic reticulum histidine-rich calcium-binding protein (852 aa).

The signal sequence occupies residues 1 to 27; sequence MGCRGPWLHTCLLWAAVASLLLPPAVT. Gln-28 carries the pyrrolidone carboxylic acid modification. Over residues 44–58 the composition is skewed to low complexity; the sequence is AGAPGPSGEAAAAGL. The disordered stretch occupies residues 44 to 770; the sequence is AGAPGPSGEA…EDTGPEDTQE (727 aa). A run of 2 repeats spans residues 59–79 and 80–100. Residues 59–100 form a 2 X approximate tandem repeats region; sequence GHHGHSHRSPGEENEDVSMENGHHFWSHRDHGETDDEVSREY. The segment covering 79–101 has biased composition (basic and acidic residues); the sequence is NGHHFWSHRDHGETDDEVSREYG. Phosphoserine is present on Ser-120. A compositionally biased stretch (basic and acidic residues) spans 146 to 157; it reads LAEHGSHGHGHE. 12 stretches are compositionally biased toward acidic residues: residues 184–195, 208–217, 233–246, 261–275, 291–303, 319–332, 348–360, 376–388, 404–416, 432–444, 459–468, and 484–497; these read EEGEEEEEEEEV, DEEDEDDDST, EEDE…GDST, EEED…GDST, EEDD…GDST, EEEDEDDDDE, and EDDG…DDST. 10 consecutive repeat copies span residues 199-224, 225-253, 254-282, 283-310, 311-339, 340-367, 368-395, 396-423, 424-451, and 452-470. A 10 X tandem repeats, acidic region spans residues 199 to 470; it reads HRHRGHGKED…EDEDDDDEGE (272 aa). Residues 471 to 585 form a 4 X approximate tandem repeats region; that stretch reads HHHVPHRGHR…HHVASHPPPG (115 aa). Positions 509-536 are enriched in basic and acidic residues; the sequence is HGKEEAEVTSDEHHHHVPDHGHQGHGDK. Residues Ser-518, Ser-544, and Ser-614 each carry the phosphoserine modification. Basic and acidic residues-rich tracts occupy residues 587–619, 630–646, and 658–681; these read RSRE…ERGH, PPED…KEEV, and DGSR…HHSL. Acidic residues predominate over residues 722 to 733; it reads EEEEEEEEEEEE. The segment covering 746 to 757 has biased composition (low complexity); the sequence is SGREAAGGASSE. A compositionally biased stretch (acidic residues) spans 758–769; that stretch reads ESAEDTGPEDTQ. Residues 780-826 form a metal-binding region; it reads CGYCTFCNRCTECEHCHCDEDSMGEHCDQCQHCQFCYLCPLVCETVC.

The protein belongs to the HRC family. Post-translationally, the N-terminus is blocked.

It localises to the sarcoplasmic reticulum lumen. In terms of biological role, may play a role in the regulation of calcium sequestration or release in the SR of skeletal and cardiac muscle. The chain is Sarcoplasmic reticulum histidine-rich calcium-binding protein (HRC) from Oryctolagus cuniculus (Rabbit).